The following is a 292-amino-acid chain: Putative OX-2 membrane glycoprotein homolog (292 aa).

An N-terminal signal peptide occupies residues 1-18 (MSPLMLRLLPLLCIIISA). The Ig-like V-type domain occupies 24–136 (PETSPSLVYE…TFTVDNEKTS (113 aa)). A disulfide bridge connects residues Cys42 and Cys126. 4 N-linked (GlcNAc...) asparagine; by host glycosylation sites follow: Asn45, Asn57, Asn72, and Asn195. The Ig-like C2-type domain maps to 147 to 237 (PIVVLYFRYL…TNQKASALVT (91 aa)). A helical transmembrane segment spans residues 263 to 283 (VFTWIVPLILILIISVMVLLI).

Its subcellular location is the host membrane. This Human herpesvirus 6B (strain Z29) (HHV-6 variant B) protein is Putative OX-2 membrane glycoprotein homolog (U85).